Consider the following 184-residue polypeptide: Probable archaeosortase E (184 aa).

The next 4 helical transmembrane spans lie at I27–F47, V86–Y106, I114–I134, and I151–I171. C90 acts as the Acyl-thioester intermediate in catalysis. Residue R130 is the Proton donor of the active site.

The protein belongs to the exosortase/archaeosortase family. Archaeosortase E subfamily.

It localises to the cell membrane. Transpeptidase that recognizes and modifies its substrate by proteolytic cleavage of a sorting signal. Following cleavage, a covalent intermediate is formed via a thioester bond between the archaeosortase and its substrate, which is then transferred and covalently attached to the cell membrane. The polypeptide is Probable archaeosortase E (Methanocaldococcus jannaschii (strain ATCC 43067 / DSM 2661 / JAL-1 / JCM 10045 / NBRC 100440) (Methanococcus jannaschii)).